An 87-amino-acid polypeptide reads, in one-letter code: Insertion element IS407 uncharacterized 10.0 kDa protein (87 aa).

The protein belongs to the transposase 8 family.

The polypeptide is Insertion element IS407 uncharacterized 10.0 kDa protein (Burkholderia multivorans (strain ATCC 17616 / 249)).